The primary structure comprises 330 residues: D-alanine--D-alanine ligase (330 aa).

The 202-residue stretch at 122–323 folds into the ATP-grasp domain; it reads NRFLSGFGIR…MKEVLCTIIR (202 aa). Residue 151 to 206 participates in ATP binding; the sequence is IARMGLPLFVKPNVGGSSIATTKVVEAAQLLPAIEQAFSEGEEVMIERLICGTEVT. The Mg(2+) site is built by aspartate 277, glutamate 290, and asparagine 292.

It belongs to the D-alanine--D-alanine ligase family. It depends on Mg(2+) as a cofactor. Requires Mn(2+) as cofactor.

The protein localises to the cytoplasm. It carries out the reaction 2 D-alanine + ATP = D-alanyl-D-alanine + ADP + phosphate + H(+). It participates in cell wall biogenesis; peptidoglycan biosynthesis. Its function is as follows. Cell wall formation. The protein is D-alanine--D-alanine ligase of Porphyromonas gingivalis (strain ATCC BAA-308 / W83).